The following is a 572-amino-acid chain: Urease subunit alpha (572 aa).

The Urease domain occupies 133-572 (GGIDLHVHYI…TSLSQRYFLF (440 aa)). Ni(2+) is bound by residues His138, His140, and Lys221. The residue at position 221 (Lys221) is an N6-carboxylysine. Residue His223 coordinates substrate. Ni(2+)-binding residues include His250 and His276. His324 functions as the Proton donor in the catalytic mechanism. Asp364 contributes to the Ni(2+) binding site.

This sequence belongs to the metallo-dependent hydrolases superfamily. Urease alpha subunit family. As to quaternary structure, heterotrimer of UreA (gamma), UreB (beta) and UreC (alpha) subunits. Three heterotrimers associate to form the active enzyme. The cofactor is Ni cation. Carboxylation allows a single lysine to coordinate two nickel ions.

The protein resides in the cytoplasm. The catalysed reaction is urea + 2 H2O + H(+) = hydrogencarbonate + 2 NH4(+). It participates in nitrogen metabolism; urea degradation; CO(2) and NH(3) from urea (urease route): step 1/1. Ureolysis may allow urea to be employed as a nitrogen source for growth and produces ammonia which may protect from killing at low pH. The chain is Urease subunit alpha from Streptococcus salivarius (strain 57.I).